Consider the following 187-residue polypeptide: Large ribosomal subunit protein uL5 (187 aa).

This sequence belongs to the universal ribosomal protein uL5 family. Part of the 50S ribosomal subunit; part of the 5S rRNA/L5/L18/L25 subcomplex. Contacts the 5S rRNA and the P site tRNA. Forms a bridge to the 30S subunit in the 70S ribosome.

This is one of the proteins that bind and probably mediate the attachment of the 5S RNA into the large ribosomal subunit, where it forms part of the central protuberance. In the 70S ribosome it contacts protein S13 of the 30S subunit (bridge B1b), connecting the 2 subunits; this bridge is implicated in subunit movement. Contacts the P site tRNA; the 5S rRNA and some of its associated proteins might help stabilize positioning of ribosome-bound tRNAs. The protein is Large ribosomal subunit protein uL5 of Mycolicibacterium smegmatis (strain ATCC 700084 / mc(2)155) (Mycobacterium smegmatis).